The chain runs to 310 residues: Metal ABC transporter substrate-binding lipoprotein ScbA (310 aa).

The signal sequence occupies residues 1–19 (MKKCRFLVLLLLAFVGLAA). Cys-20 carries N-palmitoyl cysteine lipidation. Cys-20 carries the S-diacylglycerol cysteine lipid modification. The a divalent metal cation site is built by His-68, His-140, Glu-206, and Asp-281.

It belongs to the bacterial solute-binding protein 9 family.

It is found in the cell membrane. In terms of biological role, part of an ATP-binding cassette (ABC) transport system involved in metal import. Binds a metal with high affinity and specificity and delivers it to the membrane permease for translocation into the cytoplasm. Part of an ATP-driven transport system for manganese. Does not exhibit adhesion properties. This chain is Metal ABC transporter substrate-binding lipoprotein ScbA (scbA), found in Streptococcus cristatus.